Reading from the N-terminus, the 334-residue chain is Anthranilate phosphoribosyltransferase (334 aa).

5-phospho-alpha-D-ribose 1-diphosphate contacts are provided by residues Gly-81, 84–85 (GD), Thr-89, 91–94 (NIST), 109–117 (KHGSRSVSS), and Ala-121. Gly-81 provides a ligand contact to anthranilate. Position 93 (Ser-93) interacts with Mg(2+). Residue Arg-167 coordinates anthranilate. Residues Asp-225 and Glu-226 each coordinate Mg(2+).

It belongs to the anthranilate phosphoribosyltransferase family. Homodimer. Requires Mg(2+) as cofactor.

It carries out the reaction N-(5-phospho-beta-D-ribosyl)anthranilate + diphosphate = 5-phospho-alpha-D-ribose 1-diphosphate + anthranilate. It participates in amino-acid biosynthesis; L-tryptophan biosynthesis; L-tryptophan from chorismate: step 2/5. Its function is as follows. Catalyzes the transfer of the phosphoribosyl group of 5-phosphorylribose-1-pyrophosphate (PRPP) to anthranilate to yield N-(5'-phosphoribosyl)-anthranilate (PRA). This is Anthranilate phosphoribosyltransferase from Actinobacillus pleuropneumoniae serotype 5b (strain L20).